The chain runs to 541 residues: CTP synthase (541 aa).

Residues 1-271 (MVGKLNPTRF…DTQILKHFDV (271 aa)) are amidoligase domain. Position 19 (Ser19) interacts with CTP. Ser19 is a UTP binding site. ATP is bound by residues 20-25 (SLGKGL) and Asp77. Positions 77 and 145 each coordinate Mg(2+). Residues 152–154 (DIE), 192–197 (KTKPTQ), and Lys228 each bind CTP. UTP contacts are provided by residues 192–197 (KTKPTQ) and Lys228. Residues 296–537 (VIAIVGKYVT…VTSTLQVKKA (242 aa)) enclose the Glutamine amidotransferase type-1 domain. Gly355 provides a ligand contact to L-glutamine. The active-site Nucleophile; for glutamine hydrolysis is Cys382. L-glutamine contacts are provided by residues 383–386 (LGMQ), Glu406, and Arg465. Catalysis depends on residues His510 and Glu512.

It belongs to the CTP synthase family. In terms of assembly, homotetramer.

The enzyme catalyses UTP + L-glutamine + ATP + H2O = CTP + L-glutamate + ADP + phosphate + 2 H(+). The catalysed reaction is L-glutamine + H2O = L-glutamate + NH4(+). It catalyses the reaction UTP + NH4(+) + ATP = CTP + ADP + phosphate + 2 H(+). The protein operates within pyrimidine metabolism; CTP biosynthesis via de novo pathway; CTP from UDP: step 2/2. Allosterically activated by GTP, when glutamine is the substrate; GTP has no effect on the reaction when ammonia is the substrate. The allosteric effector GTP functions by stabilizing the protein conformation that binds the tetrahedral intermediate(s) formed during glutamine hydrolysis. Inhibited by the product CTP, via allosteric rather than competitive inhibition. Its function is as follows. Catalyzes the ATP-dependent amination of UTP to CTP with either L-glutamine or ammonia as the source of nitrogen. Regulates intracellular CTP levels through interactions with the four ribonucleotide triphosphates. In Anaplasma phagocytophilum (strain HZ), this protein is CTP synthase.